The sequence spans 237 residues: Thrombin-like enzyme agkihpin-1 (237 aa).

Met-1 is a propeptide. Residues 2-228 (ILGDDECNIN…HLDWIENIIA (227 aa)) enclose the Peptidase S1 domain. Residues Cys-27 and Cys-43 are joined by a disulfide bond. His-42 (charge relay system) is an active-site residue. The N-linked (GlcNAc...) asparagine glycan is linked to Asn-80. Asp-87 acts as the Charge relay system in catalysis. Cystine bridges form between Cys-119/Cys-189, Cys-151/Cys-168, and Cys-179/Cys-204. The active-site Charge relay system is Ser-183.

Belongs to the peptidase S1 family. Snake venom subfamily. In terms of tissue distribution, expressed by the venom gland.

Its subcellular location is the secreted. The hydrolysis of TAMe (tosyl-arginine methyl ester) substrate is activated by Ca(2+), Fe(3+), Mg(2+) and Zn(2+), and inhibited by EDTA, PMSF and DTT. Functionally, thrombin-like enzyme that shows fibrinogenolytic activity against bovine fibrinogen alpha and beta chains, but not gamma chain. Hydrolyzes fibrin. Enhances ADP-induced human platelet aggregation. Has arginine esterase activity for TAMe (tosyl-arginine methyl ester) substrate. Reduces thrombin-induced thrombosis. Does not have hemorrhagic activity. Reduces the motility of human liver cancer HepG2 cells in a wound-healing assay. This is Thrombin-like enzyme agkihpin-1 from Gloydius halys (Chinese water mocassin).